The following is a 254-amino-acid chain: Hydroxyethylthiazole kinase (254 aa).

Substrate is bound at residue Met40. Arg116 and Ser162 together coordinate ATP. Residue Gly189 coordinates substrate.

Belongs to the Thz kinase family. It depends on Mg(2+) as a cofactor.

The enzyme catalyses 5-(2-hydroxyethyl)-4-methylthiazole + ATP = 4-methyl-5-(2-phosphooxyethyl)-thiazole + ADP + H(+). The protein operates within cofactor biosynthesis; thiamine diphosphate biosynthesis; 4-methyl-5-(2-phosphoethyl)-thiazole from 5-(2-hydroxyethyl)-4-methylthiazole: step 1/1. Its function is as follows. Catalyzes the phosphorylation of the hydroxyl group of 4-methyl-5-beta-hydroxyethylthiazole (THZ). In Limosilactobacillus fermentum (strain NBRC 3956 / LMG 18251) (Lactobacillus fermentum), this protein is Hydroxyethylthiazole kinase.